The sequence spans 608 residues: AAA ATPase forming ring-shaped complexes (608 aa).

Positions 45–79 (AQEYDAVLRRLSAAEATRDNMSRQIRGAGEKNRKL) form a coiled coil. 302–307 (GNGKTM) is a binding site for ATP.

This sequence belongs to the AAA ATPase family. Homohexamer. Assembles into a hexameric ring structure.

This chain is AAA ATPase forming ring-shaped complexes, found in Rothia mucilaginosa (strain DY-18) (Stomatococcus mucilaginosus).